The sequence spans 155 residues: Small ribosomal subunit protein uS7c (155 aa).

It belongs to the universal ribosomal protein uS7 family. As to quaternary structure, part of the 30S ribosomal subunit.

It is found in the plastid. The protein resides in the chloroplast. In terms of biological role, one of the primary rRNA binding proteins, it binds directly to 16S rRNA where it nucleates assembly of the head domain of the 30S subunit. This Marchantia polymorpha (Common liverwort) protein is Small ribosomal subunit protein uS7c (rps7).